Reading from the N-terminus, the 285-residue chain is Bifunctional protein FolD (285 aa).

Residues Gly-165 to Ser-167 and Ser-190 contribute to the NADP(+) site.

It belongs to the tetrahydrofolate dehydrogenase/cyclohydrolase family. As to quaternary structure, homodimer.

The enzyme catalyses (6R)-5,10-methylene-5,6,7,8-tetrahydrofolate + NADP(+) = (6R)-5,10-methenyltetrahydrofolate + NADPH. It catalyses the reaction (6R)-5,10-methenyltetrahydrofolate + H2O = (6R)-10-formyltetrahydrofolate + H(+). Its pathway is one-carbon metabolism; tetrahydrofolate interconversion. Catalyzes the oxidation of 5,10-methylenetetrahydrofolate to 5,10-methenyltetrahydrofolate and then the hydrolysis of 5,10-methenyltetrahydrofolate to 10-formyltetrahydrofolate. This chain is Bifunctional protein FolD, found in Burkholderia mallei (strain NCTC 10247).